Consider the following 180-residue polypeptide: MECPYCQNTSSRVLESRSTEAGQSIRRRRECLQCKHRFTTYERIEFVPISVLKKDKSKESFDRSKLLRGIVRACEKTEVSAQQIENVVEEIEARLQQSPRREITSQEIGQLVLQYLRELNEVAYIRFASVYGEFKGITDFVETLNQLQQEERESSSSPEWSDAGEEATVIEDSSQVMASS.

The segment at 3 to 34 (CPYCQNTSSRVLESRSTEAGQSIRRRRECLQC) is a zinc-finger region. Positions 49 to 139 (ISVLKKDKSK…VYGEFKGITD (91 aa)) constitute an ATP-cone domain. The segment at 148–180 (QQEERESSSSPEWSDAGEEATVIEDSSQVMASS) is disordered. A compositionally biased stretch (polar residues) spans 171-180 (EDSSQVMASS).

Belongs to the NrdR family. The cofactor is Zn(2+).

In terms of biological role, negatively regulates transcription of bacterial ribonucleotide reductase nrd genes and operons by binding to NrdR-boxes. This chain is Transcriptional repressor NrdR, found in Gloeothece citriformis (strain PCC 7424) (Cyanothece sp. (strain PCC 7424)).